Reading from the N-terminus, the 139-residue chain is Gastrula zinc finger protein XlCGF67.1 (139 aa).

5 C2H2-type zinc fingers span residues 6–28 (VSCPECGKCFTSRTYLNVHKKVH), 33–55 (YSCSECGKSFLSRSHLNTHLRTH), 61–83 (YSCSECGKCFTSSAILITHKRIH), 89–111 (FSCQECGKSFSYRSVFMEHQKIH), and 117–139 (FSCSDCGKCFRYRSHLKVHSRIH).

It belongs to the krueppel C2H2-type zinc-finger protein family.

The protein resides in the nucleus. May be involved in transcriptional regulation. The sequence is that of Gastrula zinc finger protein XlCGF67.1 from Xenopus laevis (African clawed frog).